The primary structure comprises 167 residues: CKLF-like MARVEL transmembrane domain-containing protein 7 (167 aa).

In terms of domain architecture, MARVEL spans Tyr-32 to Cys-158. Helical transmembrane passes span Thr-35 to Val-55, Phe-69 to Phe-89, Leu-102 to Ile-122, and Leu-132 to Leu-152.

Belongs to the chemokine-like factor family.

The protein resides in the membrane. This chain is CKLF-like MARVEL transmembrane domain-containing protein 7 (Cmtm7), found in Mus musculus (Mouse).